Reading from the N-terminus, the 394-residue chain is Lipoyl synthase, chloroplastic (394 aa).

Residues 1–36 (MMHHCSITKPTFSISISTQKLHHHSSKFLNLGFRIR) constitute a chloroplast transit peptide. Residues cysteine 127, cysteine 132, cysteine 138, cysteine 158, cysteine 162, cysteine 165, and serine 373 each contribute to the [4Fe-4S] cluster site. Residues 141 to 362 (GGGDGVATAT…KTYGESIGFR (222 aa)) form the Radical SAM core domain.

This sequence belongs to the radical SAM superfamily. Lipoyl synthase family. Requires [4Fe-4S] cluster as cofactor. In terms of tissue distribution, expressed in roots, leaves and flowers.

The protein resides in the plastid. It localises to the chloroplast. It catalyses the reaction [[Fe-S] cluster scaffold protein carrying a second [4Fe-4S](2+) cluster] + N(6)-octanoyl-L-lysyl-[protein] + 2 oxidized [2Fe-2S]-[ferredoxin] + 2 S-adenosyl-L-methionine + 4 H(+) = [[Fe-S] cluster scaffold protein] + N(6)-[(R)-dihydrolipoyl]-L-lysyl-[protein] + 4 Fe(3+) + 2 hydrogen sulfide + 2 5'-deoxyadenosine + 2 L-methionine + 2 reduced [2Fe-2S]-[ferredoxin]. It functions in the pathway protein modification; protein lipoylation via endogenous pathway; protein N(6)-(lipoyl)lysine from octanoyl-[acyl-carrier-protein]: step 2/2. Functionally, catalyzes the radical-mediated insertion of two sulfur atoms into the C-6 and C-8 positions of the octanoyl moiety bound to the lipoyl domains of lipoate-dependent enzymes, thereby converting the octanoylated domains into lipoylated derivatives. Together with LIP2P and LIP2P2 is essential for de novo plastidial protein lipoylation during seed development. The protein is Lipoyl synthase, chloroplastic of Arabidopsis thaliana (Mouse-ear cress).